The following is a 950-amino-acid chain: Protocadherin alpha-9 (950 aa).

A signal peptide spans 1–29; it reads MLYSSRGDPEGQPLLLSLLILAMWVVGSG. Cadherin domains follow at residues 30-133, 134-242, 243-350, 351-455, 456-565, and 588-678; these read QLHY…PPVF, PATQ…APVF, DRTL…APQL, TIKT…APAF, AQSE…APAL, and GVVV…APKS. At 30–697 the chain is on the extracellular side; the sequence is QLHYSVPEEA…GPEVTLVDVN (668 aa). Asparagine 254 and asparagine 265 each carry an N-linked (GlcNAc...) asparagine glycan. Residue asparagine 548 is glycosylated (N-linked (GlcNAc...) asparagine). The helical transmembrane segment at 698-718 threads the bilayer; sequence VYLIIAICAVSSLLVLTLLLY. The Cytoplasmic portion of the chain corresponds to 719–950; that stretch reads TVLRCSAMPT…GNSTTDNSDQ (232 aa). A PXXP 1 repeat occupies 734–737; it reads PGKP. Positions 734-894 are 5 X 4 AA repeats of P-X-X-P; it reads PGKPTLVCSS…PDKFIIPGSP (161 aa). Disordered regions lie at residues 770-808, 827-856, and 871-950; these read MAFS…DWRY, ILRA…EVSP, and YGPG…NSDQ. Residues 789-798 show a composition bias toward polar residues; that stretch reads PSASSDSTGK. PXXP repeat units lie at residues 799–802, 832–835, 873–876, and 891–894; these read PRQP, PGGP, PGNP, and PGSP. Over residues 909 to 923 the composition is skewed to basic and acidic residues; that stretch reads DKSDFITFGKKEETK.

Its subcellular location is the cell membrane. In terms of biological role, potential calcium-dependent cell-adhesion protein. May be involved in the establishment and maintenance of specific neuronal connections in the brain. The sequence is that of Protocadherin alpha-9 (PCDHA9) from Homo sapiens (Human).